A 146-amino-acid chain; its full sequence is Ferric uptake regulation protein 2 (146 aa).

Cys-96 and Cys-99 together coordinate Zn(2+).

Belongs to the Fur family.

Its subcellular location is the cytoplasm. Acts as a global negative controlling element, employing Fe(2+) as a cofactor to bind the operator of the repressed genes. In Mycolicibacterium fortuitum (Mycobacterium fortuitum), this protein is Ferric uptake regulation protein 2 (fur2).